Consider the following 550-residue polypeptide: Coiled-coil domain-containing protein 60 (550 aa).

Positions 1–21 are disordered; the sequence is MTKVPATKKLQSSPNSGAVRP. Residues 71–98 adopt a coiled-coil conformation; the sequence is AILREETAKKKKQQQLQKLKEEERNKFQ. Disordered regions lie at residues 219–293 and 336–367; these read KFKI…EPLY and AYKE…KKSK. Residues 235-256 show a composition bias toward low complexity; that stretch reads RGSTLSLSRASGGSSPQSSMIS. The span at 336-345 shows a compositional bias: polar residues; sequence AYKEMQTTLK.

The polypeptide is Coiled-coil domain-containing protein 60 (CCDC60) (Homo sapiens (Human)).